The chain runs to 299 residues: Ribosomal protein L11 methyltransferase (299 aa).

Residues Thr140, Gly161, Asp183, and Asn232 each coordinate S-adenosyl-L-methionine.

It belongs to the methyltransferase superfamily. PrmA family.

The protein localises to the cytoplasm. The catalysed reaction is L-lysyl-[protein] + 3 S-adenosyl-L-methionine = N(6),N(6),N(6)-trimethyl-L-lysyl-[protein] + 3 S-adenosyl-L-homocysteine + 3 H(+). In terms of biological role, methylates ribosomal protein L11. The protein is Ribosomal protein L11 methyltransferase of Synechococcus elongatus (strain ATCC 33912 / PCC 7942 / FACHB-805) (Anacystis nidulans R2).